The following is a 357-amino-acid chain: Protein NDRG2 (357 aa).

The tract at residues 1-28 (MAELQEVQITEEKPLLPGQTPEAAKTHS) is disordered. An N-acetylalanine modification is found at A2. The residue at position 20 (T20) is a Phosphothreonine. Residues S312 and S314 each carry the phosphoserine modification. T316 carries the post-translational modification Phosphothreonine. At S318 the chain carries Phosphoserine. Position 320 is a phosphothreonine (T320). Residues 320 to 357 (TSAASVDGNRSRSRTLSQSSESGTLSSGPPGHTMEVSC) form a disordered region. A phosphoserine mark is found at S321, S324, and S330. Over residues 333 to 347 (RTLSQSSESGTLSSG) the composition is skewed to low complexity. T334 is modified (phosphothreonine). 4 positions are modified to phosphoserine: S336, S338, S339, and S341. T343 carries the phosphothreonine modification. Phosphoserine is present on S356.

It belongs to the NDRG family. Interacts with CTNNB1.

Its subcellular location is the cytoplasm. It is found in the perinuclear region. The protein localises to the cell projection. The protein resides in the growth cone. In terms of biological role, contributes to the regulation of the Wnt signaling pathway. Down-regulates CTNNB1-mediated transcriptional activation of target genes, such as CCND1, and may thereby act as tumor suppressor. May be involved in dendritic cell and neuron differentiation. The polypeptide is Protein NDRG2 (NDRG2) (Pan troglodytes (Chimpanzee)).